The sequence spans 343 residues: Protein RecA (343 aa).

68-75 (GPESSGKT) is a binding site for ATP.

Belongs to the RecA family.

It is found in the cytoplasm. Can catalyze the hydrolysis of ATP in the presence of single-stranded DNA, the ATP-dependent uptake of single-stranded DNA by duplex DNA, and the ATP-dependent hybridization of homologous single-stranded DNAs. It interacts with LexA causing its activation and leading to its autocatalytic cleavage. This is Protein RecA from Syntrophobacter fumaroxidans (strain DSM 10017 / MPOB).